A 423-amino-acid polypeptide reads, in one-letter code: 5-hydroxytryptamine receptor 1A-alpha (423 aa).

The Extracellular segment spans residues 1–47; that stretch reads MDLRATSSNDSNATSGYSDTAAVDWDEGENATGSGSLPDPELSYQII. N-linked (GlcNAc...) asparagine glycans are attached at residues Asn-9, Asn-12, and Asn-30. A helical transmembrane segment spans residues 48–68; the sequence is TSLFLGALILCSIFGNSCVVA. Topologically, residues 69–82 are cytoplasmic; the sequence is AIALERSLQNVANY. Residues 83–107 traverse the membrane as a helical segment; sequence LIGSLAVTDLMVSVLVLPMAALYQV. Residues 108-116 lie on the Extracellular side of the membrane; the sequence is LNKWTLGQD. Residues 117-141 traverse the membrane as a helical segment; the sequence is ICDLFIALDVLCCTSSILHLCAIAL. Cysteines 118 and 196 form a disulfide. Serotonin is bound by residues Asp-125 and Cys-129. A DRY motif; important for ligand-induced conformation changes motif is present at residues 142–144; the sequence is DRY. Residues 142–161 are Cytoplasmic-facing; that stretch reads DRYWAITDPIDYVNKRTPRR. The helical transmembrane segment at 162–183 threads the bilayer; that stretch reads AAVLISVTWLIGFSISIPPMLG. The Extracellular portion of the chain corresponds to 184–202; the sequence is WRSAEDRANPDACIISQDP. A helical membrane pass occupies residues 203 to 225; sequence GYTIYSTFGAFYIPLILMLVLYG. Residues 226–347 are Cytoplasmic-facing; sequence RIFKAARFRI…LARERKTVKT (122 aa). Residues 311-332 form a disordered region; sequence LPLPNTPQSSSHENINEKTTGT. The span at 316–329 shows a compositional bias: polar residues; the sequence is TPQSSSHENINEKT. Residues Ser-320, Lys-346, Thr-347, and Gly-353 each contribute to the 1D-myo-inositol 4-phosphate site. A helical membrane pass occupies residues 348-371; it reads LGIIMGTFIFCWLPFFIVALVLPF. The Extracellular segment spans residues 372–379; sequence CAENCYMP. A helical transmembrane segment spans residues 380 to 404; the sequence is EWLGAVINWLGYSNSLLNPIIYAYF. The NPxxY motif; important for ligand-induced conformation changes and signaling signature appears at 397-401; that stretch reads NPIIY. The 1D-myo-inositol 4-phosphate site is built by Phe-404, Asn-405, and Lys-406. At 405–423 the chain is on the cytoplasmic side; the sequence is NKDFQSAFKKILRCKFHRH.

Belongs to the G-protein coupled receptor 1 family. 5-hydroxytryptamine receptor subfamily.

The protein localises to the cell membrane. With respect to regulation, G-protein coupled receptor activity is regulated by lipids: phosphatidylinositol 4-phosphate increases HTR1A-mediated activity. Functionally, G-protein coupled receptor for 5-hydroxytryptamine (serotonin). Also functions as a receptor for various drugs and psychoactive substances. Ligand binding causes a conformation change that triggers signaling via guanine nucleotide-binding proteins (G proteins) and modulates the activity of downstream effectors, such as adenylate cyclase. HTR1A is coupled to G(i)/G(o) G alpha proteins and mediates inhibitory neurotransmission: signaling inhibits adenylate cyclase activity and activates a phosphatidylinositol-calcium second messenger system that regulates the release of Ca(2+) ions from intracellular stores. Beta-arrestin family members regulate signaling by mediating both receptor desensitization and resensitization processes. The polypeptide is 5-hydroxytryptamine receptor 1A-alpha (htr1aa) (Takifugu rubripes (Japanese pufferfish)).